A 232-amino-acid chain; its full sequence is Ion-translocating oxidoreductase complex subunit E (232 aa).

6 helical membrane-spanning segments follow: residues Gly18–Ala38, Leu39–Val59, Ile69–Ala89, Gly93–Gly113, Ala127–Ala147, and Pro182–Leu202.

The protein belongs to the NqrDE/RnfAE family. As to quaternary structure, the complex is composed of six subunits: RnfA, RnfB, RnfC, RnfD, RnfE and RnfG.

The protein localises to the cell inner membrane. Part of a membrane-bound complex that couples electron transfer with translocation of ions across the membrane. The chain is Ion-translocating oxidoreductase complex subunit E from Shewanella sp. (strain ANA-3).